A 461-amino-acid chain; its full sequence is Complement C1r subcomponent-like protein (461 aa).

A signal peptide spans 1 to 22 (MCWLLLWGILHTCPTQASVLLA). In terms of domain architecture, CUB spans 23-139 (QQFPQQLTSP…KGFLALYQAA (117 aa)). 2 disulfide bridges follow: Cys-71-Cys-89 and Cys-164-Cys-197. A Sushi domain is found at 138–199 (AAVSQPNGDA…RGEEVPECVP (62 aa)). In terms of domain architecture, Peptidase S1 spans 214 to 453 (TFGSSRAKPG…YVDWIKGVIE (240 aa)). Residue His-252 is the Charge relay system of the active site. An N-linked (GlcNAc...) asparagine glycan is attached at Asn-265. The active-site Charge relay system is the Asp-308. Asn-332 carries an N-linked (GlcNAc...) asparagine glycan. 2 cysteine pairs are disulfide-bonded: Cys-371-Cys-390 and Cys-401-Cys-431. Ser-405 (charge relay system) is an active-site residue.

Belongs to the peptidase S1 family.

It is found in the secreted. Functionally, mediates the proteolytic cleavage of HP/haptoglobin in the endoplasmic reticulum. In Rattus norvegicus (Rat), this protein is Complement C1r subcomponent-like protein (C1rl).